The chain runs to 690 residues: Glycine--tRNA ligase beta subunit (690 aa).

The protein belongs to the class-II aminoacyl-tRNA synthetase family. Tetramer of two alpha and two beta subunits.

The protein resides in the cytoplasm. It catalyses the reaction tRNA(Gly) + glycine + ATP = glycyl-tRNA(Gly) + AMP + diphosphate. In Desulfatibacillum aliphaticivorans, this protein is Glycine--tRNA ligase beta subunit.